Reading from the N-terminus, the 682-residue chain is 1,4-alpha-glucan-branching enzyme (682 aa).

Residues W88 and K124 each coordinate (1,4-alpha-D-glucosyl)n. The Nucleophile role is filled by D342. The active-site Proton donor is E397.

The protein belongs to the glycosyl hydrolase 13 family. GlgB subfamily.

Its subcellular location is the cytoplasm. It carries out the reaction Transfers a segment of a (1-&gt;4)-alpha-D-glucan chain to a primary hydroxy group in a similar glucan chain.. Its pathway is glycan biosynthesis; glycogen biosynthesis. Its function is as follows. Glycogen-branching enzyme participates in the glycogen biosynthetic process along with glycogenin and glycogen synthase. Generates alpha-1,6-glucosidic branches from alpha-1,4-linked glucose chains, to increase solubility of the glycogen polymer. The polypeptide is 1,4-alpha-glucan-branching enzyme (Cryptococcus neoformans var. grubii serotype A (strain H99 / ATCC 208821 / CBS 10515 / FGSC 9487) (Filobasidiella neoformans var. grubii)).